The primary structure comprises 71 residues: MKSNKATFFLGLLLVYAFCIMLIESRCYTNDDCKDGQPCPVPLACLFGSCICPWKSQSKLPICQIICANLD.

Residues 1–25 (MKSNKATFFLGLLLVYAFCIMLIES) form the signal peptide. Intrachain disulfides connect Cys27-Cys45, Cys33-Cys50, and Cys39-Cys52.

Belongs to the DEFL family.

Its subcellular location is the secreted. The chain is Putative defensin-like protein 303 from Arabidopsis thaliana (Mouse-ear cress).